A 135-amino-acid chain; its full sequence is Protein Wnt-7a (135 aa).

Cystine bridges form between cysteine 3-cysteine 17 and cysteine 5-cysteine 12. Residue serine 9 is the site of O-palmitoleoyl serine; by PORCN attachment. Residues 41 to 69 (VEPVRASRNKRPTFLKIKKPLSYRKPMDT) form a disordered linker region. Cystine bridges form between cysteine 81/cysteine 112, cysteine 97/cysteine 107, cysteine 111/cysteine 134, and cysteine 130/cysteine 131. Asparagine 98 carries N-linked (GlcNAc...) asparagine glycosylation.

Belongs to the Wnt family. Post-translationally, palmitoleoylation is required for efficient binding to frizzled receptors. Depalmitoleoylation leads to Wnt signaling pathway inhibition. As to expression, in embryo, in brain and ventral neural tube; in adults, in brain.

The protein resides in the secreted. The protein localises to the extracellular space. It localises to the extracellular matrix. In terms of biological role, ligand for members of the frizzled family of seven transmembrane receptors that functions in the canonical Wnt/beta-catenin signaling pathway. Plays an important role in embryonic development, including dorsal versus ventral patterning during limb development, skeleton development and urogenital tract development. Required for central nervous system (CNS) angiogenesis and blood-brain barrier regulation. The sequence is that of Protein Wnt-7a (wnt7a) from Xenopus laevis (African clawed frog).